A 35-amino-acid chain; its full sequence is GLFLNTVKDVAKDVAKDVAGKLLESLKCKITGCKS.

A disulfide bond links cysteine 28 and cysteine 33.

Expressed by the skin glands.

It localises to the secreted. Antibacterial activity against Gram-positive bacterium S.aureus. Shows no detectable hemolytic activity towards human erythrocytes. In Lithobates septentrionalis (Mink frog), this protein is Ranatuerin-2SPa.